We begin with the raw amino-acid sequence, 321 residues long: Non-canonical heme oxygenase HOZ, chloroplastic (321 aa).

The N-terminal 45 residues, 1 to 45 (MKSLVAHFSTPLITARLVPRCIIHRASISAVSFSTVRRRFSPLTM), are a transit peptide targeting the chloroplast. The interval 96 to 116 (CGMLSTFSQKYEGYPSGSMVD) is dimerization. Residues Ser130, Val134, and His135 each contribute to the heme b site. 2 dimerization regions span residues 144–166 (KCSL…LHGD) and 205–208 (KVVR).

Homodimer. Binds to heme in the interdimer interface; the heme iron is coordinated by a fixed water molecule.

It is found in the plastid. The protein resides in the chloroplast. In terms of biological role, dimeric beta-barrel protein binding to heme and catalyzing its degradation to produce biliverdin. May function in the tetrapyrrole biosynthetic pathway. The polypeptide is Non-canonical heme oxygenase HOZ, chloroplastic (Arabidopsis thaliana (Mouse-ear cress)).